Consider the following 375-residue polypeptide: Tubulinyl-Tyr carboxypeptidase 1 (375 aa).

Residues 1-33 are compositionally biased toward low complexity; it reads MPGGKKVVPSGSSSASPNAAATTTAAAAAAAAA. A disordered region spans residues 1–69; sequence MPGGKKVVPS…EEDLRDGGVP (69 aa). Residues 53–63 show a composition bias toward acidic residues; that stretch reads EEPEEEGEEDL. Residues Cys-179, His-214, and Ser-231 contribute to the active site. Residues 309–375 form a disordered region; sequence RDMRLKIGKG…PDLSGYQIRV (67 aa). The tract at residues 329–375 is involved in heparin-binding and antiangiogenic activity; sequence KKDVSSPQRAQSSPHRRNSRSERRPSGEKKPAEPKAMPDLSGYQIRV. The segment covering 347–361 has biased composition (basic and acidic residues); that stretch reads SRSERRPSGEKKPAE.

It belongs to the transglutaminase-like superfamily. Vasohibin family. In terms of assembly, interacts with SVBP; interaction enhances VASH1 tyrosine carboxypeptidase activity. In terms of processing, ubiquitinated in vitro. As to expression, expressed at low level in proliferating endothelial cells at the sprouting front but highly expressed in nonproliferating endothelial cells in the termination zone.

It is found in the cytoplasm. The protein localises to the secreted. The catalysed reaction is C-terminal L-alpha-aminoacyl-L-glutamyl-L-glutamyl-L-tyrosyl-[tubulin] + H2O = C-terminal L-alpha-aminoacyl-L-glutamyl-L-glutamyl-[tubulin] + L-tyrosine. Tyrosine carboxypeptidase that removes the C-terminal tyrosine residue of alpha-tubulin, thereby regulating microtubule dynamics and function. Acts as an angiogenesis inhibitor: inhibits migration, proliferation and network formation by endothelial cells as well as angiogenesis. This inhibitory effect is selective to endothelial cells as it does not affect the migration of smooth muscle cells or fibroblasts. This is Tubulinyl-Tyr carboxypeptidase 1 from Mus musculus (Mouse).